Here is a 591-residue protein sequence, read N- to C-terminus: Autotransporter adhesin NhhA (591 aa).

The N-terminal stretch at 1–51 is a signal peptide; the sequence is MNKIYRIIWNSALNAWVVVSELTRNHTKRASATVKTAVLATLLFATVQASA. The surface exposed passenger domain stretch occupies residues 52-503; that stretch reads NNEEQEEDLY…TNVAQLKGVA (452 aa). The tract at residues 504–591 is translocator domain; sequence QNLNNRIDNV…GASASVGYQW (88 aa). Beta stranded transmembrane passes span 537 to 547, 551 to 561, 570 to 576, and 580 to 591; these read GKSMMAIGGGT, EAGYAIGYSSI, KGTASGN, and HFGASASVGYQW.

The protein belongs to the autotransporter-2 (AT-2) (TC 1.B.40) family. As to quaternary structure, homotrimer.

Its subcellular location is the cell surface. The protein resides in the cell outer membrane. Functionally, involved in adhesion of capsulated meningococci to host epithelial cells. Interacts with laminin and heparan sulfate, promoting the adherence to the extracellular matrix (ECM) components. This Neisseria meningitidis serogroup B (strain ATCC BAA-335 / MC58) protein is Autotransporter adhesin NhhA.